A 245-amino-acid chain; its full sequence is Lytic switch protein BZLF1 (245 aa).

Residues 1 to 167 form a transactivation region; the sequence is MMDPNSTSED…RTRKPQQPES (167 aa). A phosphothreonine; by host mark is found at Thr-14 and Thr-159. Positions 157–194 match the Bipartite nuclear localization signal motif; sequence RRTRKPQQPESLEECDSELEIKRYKNRVASRKCRAKFK. Ser-167, Ser-173, and Ser-186 each carry phosphoserine; by host. The 59-residue stretch at 170 to 228 folds into the bZIP domain; the sequence is ECDSELEIKRYKNRVASRKCRAKFKQLLQHYREVAAAKSSENDRLRLLLKQMCPSLDVD. The tract at residues 178–195 is basic motif; it reads KRYKNRVASRKCRAKFKQ. The interval 196–228 is leucine-zipper; it reads LLQHYREVAAAKSSENDRLRLLLKQMCPSLDVD. Residues 229–245 form an accessory activation domain region; it reads SIIPRTPDVLHEDLLNF.

Belongs to the bZIP family. As to quaternary structure, homodimer. Interacts (via b-ZIP domain) with the DNA polymerase processivity factor BMRF1 (via N-terminus); this interaction may inhibit BZLF1-induced transcription of the BMRF1 promoter. Interacts with human UBN1, CRTC2 and RACK1. Interacts (via N-terminus) with human PAX5 (via N-terminus); this interaction inhibits BZLF1-mediated lytic viral reactivation. Interacts (via leucine-zipper domain) with host CEBPA; this interaction induces G1 host cell cycle arrest. Interacts (via C-terminus) with host TP53BP1 (via C-terminus); this interaction is involved in the activation of the viral lytic cycle. Interacts with host chromatin-remodeling ATPase INO80; this interaction participates to the activation of early lytic viral genes by BZLF1. Interacts with host regulator of chromatin SMARCA5/hSNF2H; this interaction participates to the activation of early lytic viral genes by BZLF1. Interacts with host PLSCR1/Phospholipid scramblase 1; this interaction negatively regulates the transcriptional regulatory activity of BZLF1 by preventing the formation of the BZLF1-CBP complex.

Its subcellular location is the host nucleus. In terms of biological role, transcription factor that acts as a molecular switch to induce the transition from the latent to the lytic or productive phase of the virus cycle. Mediates the switch from the latent to the lytic cycle of infection in cells containing a highly methylated viral genome. Probably binds to silenced chromatin and recruits host chromatin-remodeling enzymes. Regulates this switch by binding to 2 types of ZEBRA response elements (ZREs): the CpG-free AP-1 like elements (latency) and the methylated CpG-containing elements (lytic replication). Activates preferentially the methylated forms of the viral lytic R (BRLF1) and Na (BRRF1) gene promoters, the latters being the first genes activated during Z-mediated reactivation in latently infected cells. BZLF1 and BRLF1 act together to trigger lytic replication. Also binds the lytic origin of replication, oriLyt. Induces G1 cell cycle arrest by stabilizing the host CCAAT/enhancer binding protein CEBPA. This function is important because the lytic cycle preferentially takes place in host cells arrested in G1. The sequence is that of Lytic switch protein BZLF1 from Epstein-Barr virus (strain B95-8) (HHV-4).